The sequence spans 509 residues: Lanosterol 14-alpha demethylase (509 aa).

Residues 30-50 (GNLLSMLLIACAFTLSLVYLF) form a helical membrane-spanning segment. Cysteine 455 is a heme binding site.

It belongs to the cytochrome P450 family. It depends on heme as a cofactor. Post-translationally, ubiquitinated by MARCHF6, leading to proteasomal degradation.

Its subcellular location is the endoplasmic reticulum membrane. The protein resides in the microsome membrane. It catalyses the reaction a 14alpha-methyl steroid + 3 reduced [NADPH--hemoprotein reductase] + 3 O2 = a Delta(14) steroid + formate + 3 oxidized [NADPH--hemoprotein reductase] + 4 H2O + 4 H(+). The enzyme catalyses lanosterol + 3 reduced [NADPH--hemoprotein reductase] + 3 O2 = 4,4-dimethyl-5alpha-cholesta-8,14,24-trien-3beta-ol + formate + 3 oxidized [NADPH--hemoprotein reductase] + 4 H2O + 4 H(+). The catalysed reaction is 24,25-dihydrolanosterol + 3 reduced [NADPH--hemoprotein reductase] + 3 O2 = 4,4-dimethyl-8,14-cholestadien-3beta-ol + formate + 3 oxidized [NADPH--hemoprotein reductase] + 4 H2O + 4 H(+). It carries out the reaction a 14alpha-methyl steroid + reduced [NADPH--hemoprotein reductase] + O2 = a 14alpha-hydroxymethyl steroid + oxidized [NADPH--hemoprotein reductase] + H2O + H(+). It catalyses the reaction a 14alpha-hydroxymethyl steroid + reduced [NADPH--hemoprotein reductase] + O2 = a 14alpha-formyl steroid + oxidized [NADPH--hemoprotein reductase] + 2 H2O + H(+). The enzyme catalyses a 14alpha-formyl steroid + reduced [NADPH--hemoprotein reductase] + O2 = a Delta(14) steroid + formate + oxidized [NADPH--hemoprotein reductase] + H2O + 2 H(+). The catalysed reaction is lanosterol + reduced [NADPH--hemoprotein reductase] + O2 = 32-hydroxylanosterol + oxidized [NADPH--hemoprotein reductase] + H2O + H(+). It carries out the reaction 32-hydroxylanosterol + reduced [NADPH--hemoprotein reductase] + O2 = 32-oxolanosterol + oxidized [NADPH--hemoprotein reductase] + 2 H2O + H(+). It catalyses the reaction 32-oxolanosterol + reduced [NADPH--hemoprotein reductase] + O2 = 4,4-dimethyl-5alpha-cholesta-8,14,24-trien-3beta-ol + formate + oxidized [NADPH--hemoprotein reductase] + H2O + 2 H(+). The enzyme catalyses 24,25-dihydrolanosterol + reduced [NADPH--hemoprotein reductase] + O2 = 32-hydroxy-24,25-dihydrolanosterol + oxidized [NADPH--hemoprotein reductase] + H2O + H(+). The catalysed reaction is 32-hydroxy-24,25-dihydrolanosterol + reduced [NADPH--hemoprotein reductase] + O2 = 32-oxo-24,25-dihydrolanosterol + oxidized [NADPH--hemoprotein reductase] + 2 H2O + H(+). It carries out the reaction 32-oxo-24,25-dihydrolanosterol + reduced [NADPH--hemoprotein reductase] + O2 = 4,4-dimethyl-8,14-cholestadien-3beta-ol + formate + oxidized [NADPH--hemoprotein reductase] + H2O + 2 H(+). It functions in the pathway steroid biosynthesis; zymosterol biosynthesis; zymosterol from lanosterol: step 1/6. With respect to regulation, inhibited by azalanstat. Inhibited by azole antifungal agents ketoconazole, itraconazole and fluconazole. Functionally, sterol 14alpha-demethylase that plays a critical role in the cholesterol biosynthesis pathway, being cholesterol the major sterol component in mammalian membranes as well as a precursor for bile acid and steroid hormone synthesis. Cytochrome P450 monooxygenase that catalyzes the three-step oxidative removal of the 14alpha-methyl group (C-32) of sterols such as lanosterol (lanosta-8,24-dien-3beta-ol) and 24,25-dihydrolanosterol (DHL) in the form of formate, and converts the sterols to 4,4-dimethyl-5alpha-cholesta-8,14,24-trien-3beta-ol and 4,4-dimethyl-8,14-cholestadien-3beta-ol, respectively, which are intermediates of cholesterol biosynthesis. Can also demethylate substrates not intrinsic to mammals, such as eburicol (24-methylene-24,25-dihydrolanosterol), but at a lower rate than DHL. This chain is Lanosterol 14-alpha demethylase, found in Pongo abelii (Sumatran orangutan).